The sequence spans 748 residues: Antigen peptide transporter 1 (748 aa).

Topologically, residues 1–15 are cytoplasmic; it reads MASSRCPAPRGCRCL. Residues 16–36 form a helical membrane-spanning segment; sequence PGASLAWLGTVLLFLADWVLL. The Lumenal segment spans residues 37–53; the sequence is RTALPRIFSLLVPTALP. Residues 54-76 traverse the membrane as a helical segment; the sequence is LLRVWAVGLSRWAVLWLGACGVL. Topologically, residues 77 to 92 are cytoplasmic; sequence RATVGSKSENAGAQGW. A helical membrane pass occupies residues 93–113; sequence LAALEPLAAALGLALPGLALF. The Lumenal segment spans residues 114–133; it reads RELISWGAPGSADSTRLLHW. The chain crosses the membrane as a helical span at residues 134–154; the sequence is GSHPSAFVVSYAAALPAAALW. The Cytoplasmic portion of the chain corresponds to 155–186; it reads HKLGSLWVPGGQGGSGNPVRRLLGCLGSETRR. The chain crosses the membrane as a helical span at residues 187–207; it reads LSLFLVLVVLSSLGEMAIPFF. The ABC transmembrane type-1 domain occupies 187–470; the sequence is LSLFLVLVVL…LLSIYPRVQK (284 aa). The Lumenal segment spans residues 208 to 227; it reads TGRLTDWILQDGSADTFTRN. A helical transmembrane segment spans residues 228–248; the sequence is LTLMSILTIASAVLEFVGDGI. Topologically, residues 249–298 are cytoplasmic; it reads YNNTMGHVHSHLQGEVFGAVLRQETEFFQQNQTGNITSRVTEDTSTLSDS. The helical transmembrane segment at 299–319 threads the bilayer; sequence LSENLSLFLWYLVRGLCLLGI. At 320-328 the chain is on the lumenal side; the sequence is MLWGSVSLT. A helical membrane pass occupies residues 329–349; it reads MVTLVTLPLLFLLPKKVGKWY. The Cytoplasmic segment spans residues 350-418; it reads QLLEVQVRES…AVNSWTTSIS (69 aa). The interval 375–420 is part of the peptide-binding site; it reads PTVRSFANEEGEAQKFREKLQEIKTLNQKEAVAYAVNSWTTSISGM. The helical transmembrane segment at 419–439 threads the bilayer; the sequence is GMLLKVGILYIGGQLVTSGAV. Over 440–443 the chain is Lumenal; it reads SSGN. The chain crosses the membrane as a helical span at residues 444 to 464; that stretch reads LVTFVLYQMQFTQAVEVLLSI. Residues 453–487 form a part of the peptide-binding site region; that stretch reads QFTQAVEVLLSIYPRVQKAVGSSEKIFEYLDRTPR. Residues 465–748 are Cytoplasmic-facing; the sequence is YPRVQKAVGS…MVQAPADAPE (284 aa). The ABC transporter domain occupies 503–742; sequence VQFQDVSFAY…KGCYWAMVQA (240 aa). ATP contacts are provided by residues 538-546, 641-647, and Q701; these read GPNGSGKST and SQLSGGQ. S545 lines the Mg(2+) pocket.

The protein belongs to the ABC transporter superfamily. ABCB family. MHC peptide exporter (TC 3.A.1.209) subfamily. In terms of assembly, heterodimer of TAP1 and TAP2 (TAP1-TAP2). A component of the peptide loading complex (PLC), interacts via TAPBP with MHCI heterodimer; this interaction mediates peptide-MHCI assembly. Interacts with PSMB5 and PSMB8. Mg(2+) serves as cofactor.

Its subcellular location is the endoplasmic reticulum membrane. It catalyses the reaction a peptide antigen(in) + ATP + H2O = a peptide antigen(out) + ADP + phosphate + H(+). In terms of biological role, ABC transporter associated with antigen processing. In complex with TAP2 mediates unidirectional translocation of peptide antigens from cytosol to endoplasmic reticulum (ER) for loading onto MHC class I (MHCI) molecules. Uses the chemical energy of ATP to export peptides against the concentration gradient. During the transport cycle alternates between 'inward-facing' state with peptide binding site facing the cytosol to 'outward-facing' state with peptide binding site facing the ER lumen. Peptide antigen binding to ATP-loaded TAP1-TAP2 induces a switch to hydrolysis-competent 'outward-facing' conformation ready for peptide loading onto nascent MHCI molecules. Subsequently ATP hydrolysis resets the transporter to the 'inward facing' state for a new cycle. As a component of the peptide loading complex (PLC), acts as a molecular scaffold essential for peptide-MHCI assembly and antigen presentation. This Gorilla gorilla gorilla (Western lowland gorilla) protein is Antigen peptide transporter 1 (TAP1).